A 151-amino-acid chain; its full sequence is UPF0178 protein Pfl01_5469 (151 aa).

This sequence belongs to the UPF0178 family.

The chain is UPF0178 protein Pfl01_5469 from Pseudomonas fluorescens (strain Pf0-1).